The chain runs to 438 residues: Xaa-Pro dipeptidase 2 (438 aa).

5 residues coordinate Mn(2+): Asp242, Asp253, His333, Glu378, and Glu414.

It belongs to the peptidase M24B family. Bacterial-type prolidase subfamily. Mn(2+) serves as cofactor.

It catalyses the reaction Xaa-L-Pro dipeptide + H2O = an L-alpha-amino acid + L-proline. Splits dipeptides with a prolyl residue in the C-terminal position. In Idiomarina loihiensis (strain ATCC BAA-735 / DSM 15497 / L2-TR), this protein is Xaa-Pro dipeptidase 2.